A 396-amino-acid chain; its full sequence is Flavohemoprotein (396 aa).

One can recognise a Globin domain in the interval 1–136 (MLDAQTIATV…LANVFINREA (136 aa)). Heme b is bound at residue H85. Catalysis depends on charge relay system residues Y95 and E135. A reductase region spans residues 147–396 (GGWEGTRDFR…YECFGPHKVL (250 aa)). An FAD-binding FR-type domain is found at 150 to 255 (EGTRDFRIVA…VAPAGDFFMA (106 aa)). Residues Y188 and 204–207 (RQYS) contribute to the FAD site. 268-273 (GVGQTP) lines the NADP(+) pocket. 389-392 (CFGP) contributes to the FAD binding site.

Belongs to the globin family. Two-domain flavohemoproteins subfamily. The protein in the C-terminal section; belongs to the flavoprotein pyridine nucleotide cytochrome reductase family. The cofactor is heme b. It depends on FAD as a cofactor.

It catalyses the reaction 2 nitric oxide + NADPH + 2 O2 = 2 nitrate + NADP(+) + H(+). It carries out the reaction 2 nitric oxide + NADH + 2 O2 = 2 nitrate + NAD(+) + H(+). Its function is as follows. Is involved in NO detoxification in an aerobic process, termed nitric oxide dioxygenase (NOD) reaction that utilizes O(2) and NAD(P)H to convert NO to nitrate, which protects the bacterium from various noxious nitrogen compounds. Therefore, plays a central role in the inducible response to nitrosative stress. The chain is Flavohemoprotein from Shigella flexneri.